Reading from the N-terminus, the 79-residue chain is Serine protease inhibitor Kazal-type 1 (79 aa).

The N-terminal stretch at Met1–Ala18 is a signal peptide. A Kazal-like domain is found at Asn26 to Cys79. 3 cysteine pairs are disulfide-bonded: Cys32–Cys61, Cys39–Cys58, and Cys47–Cys79.

The protein localises to the secreted. Serine protease inhibitor which exhibits anti-trypsin activity. In the pancreas, protects against trypsin-catalyzed premature activation of zymogens. In terms of biological role, in the male reproductive tract, binds to sperm heads where it modulates sperm capacitance by inhibiting calcium uptake and nitrogen oxide (NO) production. The polypeptide is Serine protease inhibitor Kazal-type 1 (Rattus norvegicus (Rat)).